The primary structure comprises 350 residues: Thymidine kinase (350 aa).

ATP is bound at residue 17 to 24 (GPFGIGKT). Glutamate 45 acts as the Proton acceptor in catalysis. Position 86 (glutamine 86) interacts with substrate. Arginine 176 contributes to the ATP binding site. Arginine 182 contributes to the substrate binding site.

Belongs to the herpesviridae thymidine kinase family. Homodimer.

It catalyses the reaction thymidine + ATP = dTMP + ADP + H(+). Catalyzes the transfer of the gamma-phospho group of ATP to thymidine to generate dTMP in the salvage pathway of pyrimidine synthesis. The dTMP serves as a substrate for DNA polymerase during viral DNA replication. Allows the virus to be reactivated and to grow in non-proliferative cells lacking a high concentration of phosphorylated nucleic acid precursors. The polypeptide is Thymidine kinase (Gallus gallus (Chicken)).